The chain runs to 173 residues: dCTP deaminase, dUMP-forming (173 aa).

DCTP is bound by residues 93–98, Asp-111, 119–121, Gln-138, and Tyr-151; these read RSSTGR and TLE. Glu-121 functions as the Proton donor/acceptor in the catalytic mechanism.

The protein belongs to the dCTP deaminase family. In terms of assembly, homotrimer.

The catalysed reaction is dCTP + 2 H2O = dUMP + NH4(+) + diphosphate. Its pathway is pyrimidine metabolism; dUMP biosynthesis; dUMP from dCTP: step 1/1. Functionally, bifunctional enzyme that catalyzes both the deamination of dCTP to dUTP and the hydrolysis of dUTP to dUMP without releasing the toxic dUTP intermediate. This Clostridium botulinum (strain Alaska E43 / Type E3) protein is dCTP deaminase, dUMP-forming.